The chain runs to 501 residues: Probable sucrose utilization protein SUC1 (501 aa).

The segment at residues 13-39 (CDSCSFRKVKCDMKTPCSRCVLNNLKC) is a DNA-binding region (zn(2)-C6 fungal-type).

It belongs to the MAL13 family.

The protein localises to the nucleus. Its function is as follows. Affects sucrose utilization and alpha-glucosidase activity. Probable transcriptional activator. The polypeptide is Probable sucrose utilization protein SUC1 (SUC1) (Candida albicans (strain SC5314 / ATCC MYA-2876) (Yeast)).